Consider the following 612-residue polypeptide: Sulfite reductase [NADPH] hemoprotein beta-component (612 aa).

Positions Met1–Glu26 are disordered. [4Fe-4S] cluster contacts are provided by Cys469, Cys475, Cys514, and Cys518. Residue Cys518 participates in siroheme binding.

It belongs to the nitrite and sulfite reductase 4Fe-4S domain family. Alpha(8)-beta(8). The alpha component is a flavoprotein, the beta component is a hemoprotein. It depends on siroheme as a cofactor. [4Fe-4S] cluster is required as a cofactor.

It catalyses the reaction hydrogen sulfide + 3 NADP(+) + 3 H2O = sulfite + 3 NADPH + 4 H(+). Its pathway is sulfur metabolism; hydrogen sulfide biosynthesis; hydrogen sulfide from sulfite (NADPH route): step 1/1. Its function is as follows. Component of the sulfite reductase complex that catalyzes the 6-electron reduction of sulfite to sulfide. This is one of several activities required for the biosynthesis of L-cysteine from sulfate. This chain is Sulfite reductase [NADPH] hemoprotein beta-component, found in Methylorubrum extorquens (strain ATCC 14718 / DSM 1338 / JCM 2805 / NCIMB 9133 / AM1) (Methylobacterium extorquens).